A 337-amino-acid chain; its full sequence is G-protein coupled receptor 26 (337 aa).

The Extracellular portion of the chain corresponds to 1 to 10 (MNSWDAGLAG). The chain crosses the membrane as a helical span at residues 11 to 31 (LLVGTIGVSLLSNGLVLLCLL). At 32–47 (HSADIRRQAPALFTLN) the chain is on the cytoplasmic side. Residues 48-68 (LTCGNLLCTVVNMPLTLAGVV) traverse the membrane as a helical segment. At 69–81 (AQRQPAGDRLCRL) the chain is on the extracellular side. A disulfide bond links C79 and C156. The chain crosses the membrane as a helical span at residues 82-102 (AAFLDTFLAANSMLSMAALSI). At 103 to 123 (DRWVAVVFPLSYRAKMRLRDA) the chain is on the cytoplasmic side. The chain crosses the membrane as a helical span at residues 124-144 (AFMVAYTWLHALTFPATALAL). At 145 to 168 (SWLGFHQLYASCTLCSRRPDERLR) the chain is on the extracellular side. The chain crosses the membrane as a helical span at residues 169 to 189 (FAVFTSAFHALSFLLSFIVLC). Residues 190–245 (FTYLKVLKVARFHCKRIDVITMQTLVLLVDIHPSVRERCLEEQKRRRQRATKKIST) are Cytoplasmic-facing. A helical transmembrane segment spans residues 246 to 266 (FIGTFLVCFAPYVITRLVELF). Topologically, residues 267–276 (STAPIDSHWG) are extracellular. Residues 277-297 (VLSKCLAYSKAASDPFVYSLL) form a helical membrane-spanning segment. Over 298–337 (RHQYRRSCKELLNRIFNRRSIHSVGLTGDSHSQNILPVSE) the chain is Cytoplasmic.

It belongs to the G-protein coupled receptor 1 family. As to expression, detected in extracts of several brain regions including striatum, pons, cerebellum and cortex. Not detected in numerous peripheral tissue extracts, except in testis. In the brain, detected in cortical structures including the anterior cingulate area, posterior cingulate and the frontoparietal, somatosensory and piriform cortices. Prominent also in the olfactory tubercle, the islands of Calleja, ventromedial and posterior nuclei of the hypothalamus, the medial septal nucleus, nucleus of the diagonal band and the ventral tegmental area. Localized also to hippocampal structures, with signals strongest over the CA2 and CA3 regions of Ammon's horn and less so over the dentate gyrus. Expressed in the caudate putamen only in its most caudal portion, with a decreasing gradient of signal from the dorsal to ventral aspect. Strong expression associated with a single pontine structure, the inferior olivary nucleus.

The protein localises to the cell membrane. Orphan receptor. Displays a significant level of constitutive activity. Its effect is mediated by G(s)-alpha protein that stimulate adenylate cyclase, resulting in an elevation of intracellular cAMP. The sequence is that of G-protein coupled receptor 26 (Gpr26) from Rattus norvegicus (Rat).